Reading from the N-terminus, the 317-residue chain is Methionyl-tRNA formyltransferase (317 aa).

Ser112–Pro115 contacts (6S)-5,6,7,8-tetrahydrofolate.

It belongs to the Fmt family.

It catalyses the reaction L-methionyl-tRNA(fMet) + (6R)-10-formyltetrahydrofolate = N-formyl-L-methionyl-tRNA(fMet) + (6S)-5,6,7,8-tetrahydrofolate + H(+). Its function is as follows. Attaches a formyl group to the free amino group of methionyl-tRNA(fMet). The formyl group appears to play a dual role in the initiator identity of N-formylmethionyl-tRNA by promoting its recognition by IF2 and preventing the misappropriation of this tRNA by the elongation apparatus. The protein is Methionyl-tRNA formyltransferase of Histophilus somni (strain 2336) (Haemophilus somnus).